The primary structure comprises 224 residues: Ras-related protein RABA4b (224 aa).

A2 bears the N-acetylalanine mark. Position 24-31 (24-31 (GDSAVGKS)) interacts with GTP. Residues 46-54 (SKATIGVEF) carry the Effector region motif. GTP is bound by residues 72 to 76 (DTAGQ), 130 to 133 (NKSD), and 160 to 161 (SA). Residues C220 and C221 are each lipidated (S-geranylgeranyl cysteine).

Belongs to the small GTPase superfamily. Rab family. As to quaternary structure, interacts with TCTP1. As to expression, expressed in roots, stems, leaves and flowers. Expressed in tips of growing root hair cells.

The protein resides in the early endosome membrane. It is found in the golgi apparatus. The protein localises to the trans-Golgi network membrane. Functionally, regulator of membrane trafficking. May be required for secretion of cell wall components in cells. This is Ras-related protein RABA4b from Arabidopsis thaliana (Mouse-ear cress).